The primary structure comprises 1167 residues: MEINNQKQCIPYNCLSNPEEVLLDGERILPDIDPLEVSLSLLQFLLNNFVPGGGFISGLVDKIWGALRPSEWDLFLAQIERLIDQRIEATVRAKAITELEGLGRNYQIYAEAFKEWESDPDNEAAKSRVIDRFRILDGLIEANIPSFRIIGFEVPLLSVYVQAANLHLALLRDSVIFGERWGLTTKNVNDIYNRQIREIHEYSNHCVDTYNTELERLGFRSIAQWRIYNQFRRELTLTVLDIVALFPNYDSRLYPIQTFSQLTREIVTSPVSEFYYGVINSGNIIGTLTEQQIRRPHLMDFFNSMIMYTSDNRREHYWSGLEMTAYFTGFAGAQVSFPLVGTRGESAPPLTVRSVNDGIYRILSAPFYSAPFLGTIVLGSRGEKFDFALNNISPPPSTIYRHPGTVDSLVSIPPQDNSVPPHRGSSHRLSHVTMRASSPIFHWTHRSATTTNTINPNAIIQIPLVKAFNLHSGATVVRGPGFTGGDILRRTNTGTFADMRVNITGPLSQRYRVRIRYASTTDLQFFTRINGTSVNQGNFQRTMNRGDNLESGNFRTAGFSTPFSFSNAQSTFTLGTQAFSNQEVYIDRIEFVPAEVTFEAESDLERAQKAVNALFTSTNQLGLKTDVTDYQIDQVSNLVECLSDEFCLDEKRELSEKVKHAKRLSDKRNLLQDPNFTSINRQLDRGWRGSTDITIQGGNDVFKENYVTLPGTFDECYPTYLYQKIDESKLKAYTRYELRGYIEDSQDLEVYLIRYNAKHETVNVPGTGSLWPLSVESPIGRCGEPNRCVPHIEWNPDLDCSCRDGEKCAHHSHHFSLDIDVGCTDLNEDLGVWVIFKIKTQDGHARLGNLEFLEEKPLLGEALARVKRAEKKWRDKREQLQFETNIVYKEAKESVDALFVDSHYNRLQADTNITMIHAADKRVHRIREAYLPELSVIPGVNADIFEELEGLIFTAFSLYDARNIIKNGDFNNGLSCWNVKGHVDIQQNDHRSVLVVPEWESEVSQEVRVCPGRGYILRVTAYKEGYGEGCVTIHEIEDNTDELKFSNCIEEEVYPTDTGNDYTAHQGTTGCADACNSRNVGYEDGYEINTTASVNYKPTYEEEMYTDVRRDNHCEYDRGYGNHTPLPAGYVTKELEYFPETDTVWIEIGETEGTFIVDSVELLLMEE.

This sequence belongs to the delta endotoxin family.

In terms of biological role, promotes colloidosmotic lysis by binding to the midgut epithelial cells of many lepidopteran larvae. The polypeptide is Pesticidal crystal protein Cry1Ja (cry1Ja) (Bacillus thuringiensis).